A 124-amino-acid chain; its full sequence is Large ribosomal subunit protein bL20 (124 aa).

Belongs to the bacterial ribosomal protein bL20 family.

Binds directly to 23S ribosomal RNA and is necessary for the in vitro assembly process of the 50S ribosomal subunit. It is not involved in the protein synthesizing functions of that subunit. The protein is Large ribosomal subunit protein bL20 of Ehrlichia canis (strain Jake).